A 244-amino-acid polypeptide reads, in one-letter code: Ribonuclease 3 (244 aa).

The 130-residue stretch at 17–146 folds into the RNase III domain; the sequence is FEKKMQELNL…FVGALYLDQG (130 aa). E59 is a binding site for Mg(2+). Residue D63 is part of the active site. The Mg(2+) site is built by D132 and E135. Residue E135 is part of the active site. The 70-residue stretch at 172-241 folds into the DRBM domain; that stretch reads DFKTQFQEYV…AERAYKILKN (70 aa).

The protein belongs to the ribonuclease III family. In terms of assembly, homodimer. It depends on Mg(2+) as a cofactor.

It localises to the cytoplasm. The enzyme catalyses Endonucleolytic cleavage to 5'-phosphomonoester.. Its function is as follows. Digests double-stranded RNA. Involved in the processing of primary rRNA transcript to yield the immediate precursors to the large and small rRNAs (23S and 16S). Processes some mRNAs, and tRNAs when they are encoded in the rRNA operon. Processes pre-crRNA and tracrRNA of type II CRISPR loci if present in the organism. This is Ribonuclease 3 from Staphylococcus saprophyticus subsp. saprophyticus (strain ATCC 15305 / DSM 20229 / NCIMB 8711 / NCTC 7292 / S-41).